We begin with the raw amino-acid sequence, 362 residues long: Chorismate synthase (362 aa).

Arg46 is an NADP(+) binding site. FMN contacts are provided by residues 122 to 124, 238 to 239, Gly278, 293 to 297, and Arg319; these read RSS, NA, and KPTPS.

The protein belongs to the chorismate synthase family. As to quaternary structure, homotetramer. The cofactor is FMNH2.

It catalyses the reaction 5-O-(1-carboxyvinyl)-3-phosphoshikimate = chorismate + phosphate. It functions in the pathway metabolic intermediate biosynthesis; chorismate biosynthesis; chorismate from D-erythrose 4-phosphate and phosphoenolpyruvate: step 7/7. Catalyzes the anti-1,4-elimination of the C-3 phosphate and the C-6 proR hydrogen from 5-enolpyruvylshikimate-3-phosphate (EPSP) to yield chorismate, which is the branch point compound that serves as the starting substrate for the three terminal pathways of aromatic amino acid biosynthesis. This reaction introduces a second double bond into the aromatic ring system. This chain is Chorismate synthase, found in Campylobacter jejuni subsp. jejuni serotype O:23/36 (strain 81-176).